The primary structure comprises 66 residues: Large ribosomal subunit protein bL32 (66 aa).

The protein belongs to the bacterial ribosomal protein bL32 family.

The polypeptide is Large ribosomal subunit protein bL32 (Rickettsia akari (strain Hartford)).